A 91-amino-acid polypeptide reads, in one-letter code: uncharacterized protein (91 aa).

The first 18 residues, 1 to 18, serve as a signal peptide directing secretion; that stretch reads MKVNLILFSLFLLVSIMA. A lipid anchor (N-palmitoyl cysteine) is attached at Cys19. Residue Cys19 is the site of S-diacylglycerol cysteine attachment.

The protein localises to the cell membrane. This is an uncharacterized protein from Escherichia coli (strain K12).